The primary structure comprises 367 residues: Outer membrane protein assembly factor BamC (367 aa).

An N-terminal signal peptide occupies residues 1–16; the sequence is MRLLPLFLMVTLAASG. Cys17 is lipidated: N-palmitoyl cysteine. A lipid anchor (S-diacylglycerol cysteine) is attached at Cys17.

This sequence belongs to the BamC family. As to quaternary structure, part of the Bam complex.

Its subcellular location is the cell outer membrane. In terms of biological role, part of the outer membrane protein assembly complex, which is involved in assembly and insertion of beta-barrel proteins into the outer membrane. The sequence is that of Outer membrane protein assembly factor BamC from Thiobacillus denitrificans (strain ATCC 25259 / T1).